Here is a 331-residue protein sequence, read N- to C-terminus: Glycerol-3-phosphate dehydrogenase [NAD(P)+] (331 aa).

3 residues coordinate NADPH: Trp-11, Arg-30, and Lys-105. Sn-glycerol 3-phosphate-binding residues include Lys-105, Gly-134, and Ser-136. Ala-138 contacts NADPH. 5 residues coordinate sn-glycerol 3-phosphate: Lys-189, Asp-242, Ser-252, Arg-253, and Asn-254. The Proton acceptor role is filled by Lys-189. Arg-253 contacts NADPH. Positions 277 and 279 each coordinate NADPH.

The protein belongs to the NAD-dependent glycerol-3-phosphate dehydrogenase family.

The protein localises to the cytoplasm. It catalyses the reaction sn-glycerol 3-phosphate + NAD(+) = dihydroxyacetone phosphate + NADH + H(+). The enzyme catalyses sn-glycerol 3-phosphate + NADP(+) = dihydroxyacetone phosphate + NADPH + H(+). It participates in membrane lipid metabolism; glycerophospholipid metabolism. Catalyzes the reduction of the glycolytic intermediate dihydroxyacetone phosphate (DHAP) to sn-glycerol 3-phosphate (G3P), the key precursor for phospholipid synthesis. This Herminiimonas arsenicoxydans protein is Glycerol-3-phosphate dehydrogenase [NAD(P)+].